An 814-amino-acid polypeptide reads, in one-letter code: Rho GTPase-activating protein 44 (814 aa).

The BAR domain occupies 14-249; that stretch reads QTVGRAEKTE…IKAQQEAWVE (236 aa). In terms of domain architecture, Rho-GAP spans 255 to 445; that stretch reads KPLEEHLMIS…PIIQHADWFF (191 aa). Disordered regions lie at residues 467-493, 528-769, and 784-814; these read ANYS…RPLS, RGSS…MSTD, and STLR…STAL. Positions 479–489 are enriched in basic and acidic residues; the sequence is PADRRQPEQAR. S493 is subject to Phosphoserine. 5 stretches are compositionally biased toward low complexity: residues 567–581, 598–612, 622–637, 684–704, and 741–752; these read SPAT…SGAS, SPGS…SIQG, PQPA…DQSP, SPYG…LSPA, and SVSLSASSPQST. Residues 727 to 814 form an interaction with BST2 region; the sequence is KPRQRPTLPP…SEEESESTAL (88 aa). Positions 790 to 805 are enriched in basic and acidic residues; that stretch reads PLEHARRHSATDKRDS. S805 is subject to Phosphoserine. The PDZ-binding signature appears at 811 to 814; it reads STAL.

In terms of assembly, interacts with BST2 (via cytoplasmic domain). Interacts (probably via PDZ-binding motif) with SHANK3 (via PDZ domain); the interaction takes place in dendritic spines and promotes GRIA1 exocytosis. Specifically expressed in brain (at protein level). Detected in olfactory bulb, cortex, hippocampus, diencephalon and cerebellum (at protein level). Expressed in hippocampal neurons (at protein level).

It is found in the cell projection. The protein resides in the dendritic spine. It localises to the recycling endosome. Its subcellular location is the presynapse. The protein localises to the dendrite. Functionally, GTPase-activating protein (GAP) that stimulates the GTPase activity of Rho-type GTPases. Thereby, controls Rho-type GTPases cycling between their active GTP-bound and inactive GDP-bound states. Acts as a GAP at least for CDC42 and RAC1. In neurons, is involved in dendritic spine formation and synaptic plasticity in a specific RAC1-GAP activity. Limits the initiation of exploratory dendritic filopodia. Recruited to actin-patches that seed filopodia, binds specifically to plasma membrane sections that are deformed inward by acto-myosin mediated contractile forces. Acts through GAP activity on RAC1 to reduce actin polymerization necessary for filopodia formation. In association with SHANK3, promotes GRIA1 exocytosis from recycling endosomes and spine morphological changes associated to long-term potentiation. The polypeptide is Rho GTPase-activating protein 44 (Mus musculus (Mouse)).